Here is a 328-residue protein sequence, read N- to C-terminus: Methionyl-tRNA formyltransferase (328 aa).

Position 121-124 (121-124) interacts with (6S)-5,6,7,8-tetrahydrofolate; the sequence is SLLP.

Belongs to the Fmt family.

It catalyses the reaction L-methionyl-tRNA(fMet) + (6R)-10-formyltetrahydrofolate = N-formyl-L-methionyl-tRNA(fMet) + (6S)-5,6,7,8-tetrahydrofolate + H(+). Functionally, attaches a formyl group to the free amino group of methionyl-tRNA(fMet). The formyl group appears to play a dual role in the initiator identity of N-formylmethionyl-tRNA by promoting its recognition by IF2 and preventing the misappropriation of this tRNA by the elongation apparatus. The polypeptide is Methionyl-tRNA formyltransferase (Paraburkholderia xenovorans (strain LB400)).